Reading from the N-terminus, the 335-residue chain is Tryptophan--tRNA ligase (335 aa).

ATP-binding positions include 19 to 21 (QPS) and 28 to 29 (GN). The short motif at 20-29 (PSSGMLHLGN) is the 'HIGH' region element. Position 143 (Asp-143) interacts with L-tryptophan. Residues 155–157 (GAD), Ile-192, and 201–205 (KMSKS) each bind ATP. Positions 201 to 205 (KMSKS) match the 'KMSKS' region motif.

Belongs to the class-I aminoacyl-tRNA synthetase family. In terms of assembly, homodimer.

The protein resides in the cytoplasm. The catalysed reaction is tRNA(Trp) + L-tryptophan + ATP = L-tryptophyl-tRNA(Trp) + AMP + diphosphate + H(+). Functionally, catalyzes the attachment of tryptophan to tRNA(Trp). In Tropheryma whipplei (strain TW08/27) (Whipple's bacillus), this protein is Tryptophan--tRNA ligase.